Consider the following 306-residue polypeptide: Transcription initiation factor IIB (306 aa).

A run of 2 repeats spans residues asparagine 122 to leucine 205 and aspartate 216 to glutamine 297.

It belongs to the TFIIB family.

Functionally, stabilizes TBP binding to an archaeal box-A promoter. Also responsible for recruiting RNA polymerase II to the pre-initiation complex (DNA-TBP-TFIIB). The chain is Transcription initiation factor IIB from Saccharolobus shibatae (strain ATCC 51178 / DSM 5389 / JCM 8931 / NBRC 15437 / B12) (Sulfolobus shibatae).